Here is a 126-residue protein sequence, read N- to C-terminus: Small ribosomal subunit protein uS11 (126 aa).

This sequence belongs to the universal ribosomal protein uS11 family. Part of the 30S ribosomal subunit.

Functionally, located on the platform of the 30S subunit. The sequence is that of Small ribosomal subunit protein uS11 from Methanosarcina acetivorans (strain ATCC 35395 / DSM 2834 / JCM 12185 / C2A).